We begin with the raw amino-acid sequence, 1408 residues long: MKDLLKFLKQQSKTEEFNGIKIGLASPDLIRSWSFGEVKKPETINYRTFKPEREGLFCARIFGPVKDYECLCGKYKRLKHRGVICEKCGVEVTQTKVRRERMGHIDLASPVAHIWFLKSLPSRIGLMLDMTLRDIERVLYFESFVVIEPGMTTLERGQMLTEETYLDALEEYGDEFEAKMGAEAVLELLRAINLAEQIEQMREELPSINSETRRKKVTKRLKLMEAFFTSGNKPEWMILKVLPVLPPDLRPLVPLDGGRFATSDLNDLYRRVINRNNRLKRLLDLAAPDIIVRNEKRMLQESVDALLDNGRRGRAITGSNKRPLKSLADMIKGKQGRFRQNLLGKRVDYSGRSVITVGPTLRLHQCGLPKKMALELFKPFIYGKLEARGLATTIKAAKKMVEREQAEVWDVLDEVIREHPVMLNRAPTLHRLGIQAFEPVLIEGKAIQLHPLVCAAYNADFDGDQMAVHVPLTLEAQLEARALMMSTNNILSPANGEPVITPSQDVVLGLYYTSRECINGRGEGMAFADVSEVEKAYATGVAELHARVKVRITETNIADDGERTKSTRIIDTTVGRALLSLILPEGLSYDLVNQNMGKKQISKLLNTCYRQLGLKDTVIFADQLMYTGFRFATISGASVGIDDMVIPDEKYTLVADAEAEVLEIQEQFQSGLVTAGERYNKVIDIWASANEKVSKAMMENLSTETVINRDGVPEQQASFNSIYMMADSGARGSAAQIRQLAGMRGLMAKPDGSIIETPITANFREGLNVLQYFISTHGARKGLADTALKTANSGYLTRRLVDVAQDLVVIEDDCGVEHGLTMKPLIEGGDVVEPLRERVLGRVVALDVMKPGTNEVLAPRNTLLDEAWCNTLEEHSIDEVIVRSVITCDTDFGVCAACYGRDLARGHIINHGEAIGVVAAQSIGEPGTQLTMRTFHIGGAASRASAENNVQVKNAGSLKLHNAKHVSNIDGKLVIVSRSSELAIIDELGREKERYKVPYGTVLEKLEDSEVAAGEIIANWDPHTHPIISEVAGSVKFVDMIDGVTMTRQTDELTGLSSVVVLDVGARTSAGKELRPAIRLVDADGNDLMIPGTEVPAQYFLPGNAIVSKDDNAKINVGDPLARIPQESSKTRDITGGLPRVADLFEARKPKEPAILAEISGTISFGKETKGKRRLVITPADGSEHYEEMIPKWRNLNVFEGEKVERGEVIADGPEAAHDILRLRGIHNVANYIVNEVQDVYRLQGVKINDKHIEVIIRQMLRKCLITSTGDTEFLEGEQAEVSRVKIANRELIAQGKTPATFERELLGITKASLATESFISAASFQETTRVLTEAAVGGKSDPLRGLKENVIVGRLIPAGTGYAYHKTRNEERAKILSSRGKVETTTVTASEAEKNLADLLNLAGSQD.

The Zn(2+) site is built by Cys-70, Cys-72, Cys-85, and Cys-88. Residues Asp-460, Asp-462, and Asp-464 each contribute to the Mg(2+) site. Zn(2+) is bound by residues Cys-814, Cys-888, Cys-895, and Cys-898.

The protein belongs to the RNA polymerase beta' chain family. In terms of assembly, the RNAP catalytic core consists of 2 alpha, 1 beta, 1 beta' and 1 omega subunit. When a sigma factor is associated with the core the holoenzyme is formed, which can initiate transcription. The cofactor is Mg(2+). Requires Zn(2+) as cofactor.

It carries out the reaction RNA(n) + a ribonucleoside 5'-triphosphate = RNA(n+1) + diphosphate. Its function is as follows. DNA-dependent RNA polymerase catalyzes the transcription of DNA into RNA using the four ribonucleoside triphosphates as substrates. This chain is DNA-directed RNA polymerase subunit beta', found in Shewanella frigidimarina (strain NCIMB 400).